Here is a 209-residue protein sequence, read N- to C-terminus: Probable GTP-binding protein EngB (209 aa).

Positions threonine 22 to alanine 198 constitute an EngB-type G domain. 2 residues coordinate Mg(2+): serine 37 and threonine 59.

It belongs to the TRAFAC class TrmE-Era-EngA-EngB-Septin-like GTPase superfamily. EngB GTPase family. Mg(2+) is required as a cofactor.

In terms of biological role, necessary for normal cell division and for the maintenance of normal septation. The protein is Probable GTP-binding protein EngB of Neisseria meningitidis serogroup C (strain 053442).